The chain runs to 418 residues: Gamma-glutamyl phosphate reductase (418 aa).

This sequence belongs to the gamma-glutamyl phosphate reductase family.

It is found in the cytoplasm. The enzyme catalyses L-glutamate 5-semialdehyde + phosphate + NADP(+) = L-glutamyl 5-phosphate + NADPH + H(+). It functions in the pathway amino-acid biosynthesis; L-proline biosynthesis; L-glutamate 5-semialdehyde from L-glutamate: step 2/2. In terms of biological role, catalyzes the NADPH-dependent reduction of L-glutamate 5-phosphate into L-glutamate 5-semialdehyde and phosphate. The product spontaneously undergoes cyclization to form 1-pyrroline-5-carboxylate. This is Gamma-glutamyl phosphate reductase from Histophilus somni (strain 129Pt) (Haemophilus somnus).